The chain runs to 70 residues: Uteroglobin (70 aa).

It belongs to the secretoglobin family. In terms of assembly, antiparallel homodimer; disulfide-linked. Interaction with LMBR1L is controversial. As to expression, club cells (nonciliated cells of the surface epithelium of the pulmonary airways).

It is found in the secreted. Binds phosphatidylcholine, phosphatidylinositol, polychlorinated biphenyls (PCB) and weakly progesterone, potent inhibitor of phospholipase A2. The protein is Uteroglobin (SCGB1A1) of Macaca fuscata fuscata (Japanese macaque).